The primary structure comprises 461 residues: MNLQIIILAAGQGKRMYSDTPKVLHHLAGKPLLTHVVETAQQLNPNAIHVIYGHGGEQIKSSLPNLPVHWVHQAEQLGTGHAVLQAMPHIPDDAYVLVLSADVPLIQVETLQSLIECSQRQNPDHSVLALLVAELENPSGLGRIIRNNQGEIYSIVEEKDANEQVKNIKEIYSGVCCTLANNLKKWLPQLSNSNAQGEYYLTEIISLAVQNKTPITSLTAKNSFEVQGINNRQQLQQLERIWQQRAANQLMEKGATLADANRFDLRGELYCGKDVYIDINCIFTGKVVLGNGCKIGPNCSLTNVTLGDGCEVYANSVLEGCHIANDCHIGPFARLRSGTQLASHCKIGNFVETKKAIFDEGTKASHLSYLGDVLLGKNVNVGAGTITCNYDGVNKHQTIIEDGVFIGSDTQLIAPVTVGANATIGAGSTIRRNVPPDELTLTESRQKTIYGWKRPVKRERD.

The pyrophosphorylase stretch occupies residues 1 to 232; the sequence is MNLQIIILAA…SFEVQGINNR (232 aa). UDP-N-acetyl-alpha-D-glucosamine is bound by residues 8–11, K22, Q73, and 78–79; these read LAAG and GT. D102 contacts Mg(2+). G142, E157, and N230 together coordinate UDP-N-acetyl-alpha-D-glucosamine. Position 230 (N230) interacts with Mg(2+). Positions 233–253 are linker; it reads QQLQQLERIWQQRAANQLMEK. Residues 254 to 461 form an N-acetyltransferase region; the sequence is GATLADANRF…WKRPVKRERD (208 aa). Positions 336 and 354 each coordinate UDP-N-acetyl-alpha-D-glucosamine. H366 functions as the Proton acceptor in the catalytic mechanism. Y369 and N380 together coordinate UDP-N-acetyl-alpha-D-glucosamine. Residues A383, 389–390, S408, and A426 contribute to the acetyl-CoA site; that span reads NY.

In the N-terminal section; belongs to the N-acetylglucosamine-1-phosphate uridyltransferase family. This sequence in the C-terminal section; belongs to the transferase hexapeptide repeat family. Homotrimer. The cofactor is Mg(2+).

The protein localises to the cytoplasm. It carries out the reaction alpha-D-glucosamine 1-phosphate + acetyl-CoA = N-acetyl-alpha-D-glucosamine 1-phosphate + CoA + H(+). The catalysed reaction is N-acetyl-alpha-D-glucosamine 1-phosphate + UTP + H(+) = UDP-N-acetyl-alpha-D-glucosamine + diphosphate. The protein operates within nucleotide-sugar biosynthesis; UDP-N-acetyl-alpha-D-glucosamine biosynthesis; N-acetyl-alpha-D-glucosamine 1-phosphate from alpha-D-glucosamine 6-phosphate (route II): step 2/2. It functions in the pathway nucleotide-sugar biosynthesis; UDP-N-acetyl-alpha-D-glucosamine biosynthesis; UDP-N-acetyl-alpha-D-glucosamine from N-acetyl-alpha-D-glucosamine 1-phosphate: step 1/1. It participates in bacterial outer membrane biogenesis; LPS lipid A biosynthesis. In terms of biological role, catalyzes the last two sequential reactions in the de novo biosynthetic pathway for UDP-N-acetylglucosamine (UDP-GlcNAc). The C-terminal domain catalyzes the transfer of acetyl group from acetyl coenzyme A to glucosamine-1-phosphate (GlcN-1-P) to produce N-acetylglucosamine-1-phosphate (GlcNAc-1-P), which is converted into UDP-GlcNAc by the transfer of uridine 5-monophosphate (from uridine 5-triphosphate), a reaction catalyzed by the N-terminal domain. This chain is Bifunctional protein GlmU, found in Legionella pneumophila subsp. pneumophila (strain Philadelphia 1 / ATCC 33152 / DSM 7513).